A 711-amino-acid polypeptide reads, in one-letter code: Pentatricopeptide repeat-containing protein At5g46580, chloroplastic (711 aa).

Residues 1–43 constitute a chloroplast transit peptide; the sequence is MATVLTTAIDVCFNPQNSDTKKHSLFLKPSLFRQSRSRKLNIS. PPR repeat units follow at residues 185-219, 220-254, 255-289, 290-324, 325-359, 360-394, 395-425, 431-465, 466-500, and 501-535; these read ETIF…GVEL, DNIT…GLMP, DEVT…GWKP, DAIA…DVKP, NVVV…GLTP, NEKT…KWPM, DFIL…MKES, DNFS…GVQV, NVMG…GVKP, and DDRL…NKKL. In terms of domain architecture, Smr spans 614–696; it reads LDVRSLSVGA…IFVATKEDLV (83 aa).

This sequence belongs to the PPR family. P subfamily.

It is found in the plastid. The protein resides in the chloroplast. This Arabidopsis thaliana (Mouse-ear cress) protein is Pentatricopeptide repeat-containing protein At5g46580, chloroplastic.